A 346-amino-acid polypeptide reads, in one-letter code: Uroporphyrinogen decarboxylase (346 aa).

Residues 21 to 25 (RQAGR), F40, D71, Y146, S201, and H316 contribute to the substrate site.

This sequence belongs to the uroporphyrinogen decarboxylase family. Homodimer.

The protein localises to the cytoplasm. It carries out the reaction uroporphyrinogen III + 4 H(+) = coproporphyrinogen III + 4 CO2. It functions in the pathway porphyrin-containing compound metabolism; protoporphyrin-IX biosynthesis; coproporphyrinogen-III from 5-aminolevulinate: step 4/4. Its function is as follows. Catalyzes the decarboxylation of four acetate groups of uroporphyrinogen-III to yield coproporphyrinogen-III. This is Uroporphyrinogen decarboxylase from Rickettsia felis (strain ATCC VR-1525 / URRWXCal2) (Rickettsia azadi).